The following is a 452-amino-acid chain: Bifunctional protein GlmU (452 aa).

Residues 1–218 (MKVLILAAGL…IVEVSGVNDR (218 aa)) form a pyrophosphorylase region. UDP-N-acetyl-alpha-D-glucosamine contacts are provided by residues 6–9 (LAAG), K20, Q68, 73–74 (GT), 95–97 (YGD), G134, E147, N162, and N216. D97 lines the Mg(2+) pocket. N216 is a binding site for Mg(2+). Residues 219 to 239 (IQLAQLETIAKQRILEKLMLS) are linker. Residues 240-452 (GVTIVDPNST…EELKNADHKE (213 aa)) form an N-acetyltransferase region. UDP-N-acetyl-alpha-D-glucosamine-binding residues include R321 and K339. H351 (proton acceptor) is an active-site residue. Y354 and N365 together coordinate UDP-N-acetyl-alpha-D-glucosamine. Residues A368, 374–375 (NY), S393, A411, and R428 contribute to the acetyl-CoA site.

This sequence in the N-terminal section; belongs to the N-acetylglucosamine-1-phosphate uridyltransferase family. It in the C-terminal section; belongs to the transferase hexapeptide repeat family. Homotrimer. Requires Mg(2+) as cofactor.

Its subcellular location is the cytoplasm. The enzyme catalyses alpha-D-glucosamine 1-phosphate + acetyl-CoA = N-acetyl-alpha-D-glucosamine 1-phosphate + CoA + H(+). It catalyses the reaction N-acetyl-alpha-D-glucosamine 1-phosphate + UTP + H(+) = UDP-N-acetyl-alpha-D-glucosamine + diphosphate. It participates in nucleotide-sugar biosynthesis; UDP-N-acetyl-alpha-D-glucosamine biosynthesis; N-acetyl-alpha-D-glucosamine 1-phosphate from alpha-D-glucosamine 6-phosphate (route II): step 2/2. It functions in the pathway nucleotide-sugar biosynthesis; UDP-N-acetyl-alpha-D-glucosamine biosynthesis; UDP-N-acetyl-alpha-D-glucosamine from N-acetyl-alpha-D-glucosamine 1-phosphate: step 1/1. The protein operates within bacterial outer membrane biogenesis; LPS lipid A biosynthesis. Functionally, catalyzes the last two sequential reactions in the de novo biosynthetic pathway for UDP-N-acetylglucosamine (UDP-GlcNAc). The C-terminal domain catalyzes the transfer of acetyl group from acetyl coenzyme A to glucosamine-1-phosphate (GlcN-1-P) to produce N-acetylglucosamine-1-phosphate (GlcNAc-1-P), which is converted into UDP-GlcNAc by the transfer of uridine 5-monophosphate (from uridine 5-triphosphate), a reaction catalyzed by the N-terminal domain. This Fervidobacterium nodosum (strain ATCC 35602 / DSM 5306 / Rt17-B1) protein is Bifunctional protein GlmU.